The chain runs to 412 residues: Putative competence-damage inducible protein (412 aa).

Belongs to the CinA family.

The polypeptide is Putative competence-damage inducible protein (Bacillus anthracis).